The chain runs to 106 residues: uncharacterized protein (106 aa).

Disordered stretches follow at residues 33–64 and 87–106; these read FKTSTRSTGKKRSKGSTSQDGKKQESLESRND and NLTGLESGGSSPPFSLAVSK. Over residues 52 to 63 the composition is skewed to basic and acidic residues; the sequence is DGKKQESLESRN. Positions 87–99 are enriched in polar residues; the sequence is NLTGLESGGSSPP.

The protein resides in the mitochondrion. This is an uncharacterized protein from Arabidopsis thaliana (Mouse-ear cress).